Here is a 914-residue protein sequence, read N- to C-terminus: Coatomer subunit beta' (914 aa).

WD repeat units follow at residues 13-54 (SRSD…KDFE), 55-94 (VCDV…KVHS), 97-136 (AHSD…ACQR), 140-180 (GHTH…ANFT), 183-224 (GHEK…CVQT), 227-266 (GHAQ…LETC), and 352-390 (ACEI…NKAF).

The protein belongs to the WD repeat COPB2 family. In terms of assembly, oligomeric complex that consists of at least the alpha, beta, beta', gamma, delta, epsilon and zeta subunits.

It is found in the cytoplasm. The protein localises to the golgi apparatus membrane. Its subcellular location is the cytoplasmic vesicle. It localises to the COPI-coated vesicle membrane. Its function is as follows. The coatomer is a cytosolic protein complex that binds to dilysine motifs and reversibly associates with Golgi non-clathrin-coated vesicles, which further mediate biosynthetic protein transport from the ER, via the Golgi up to the trans Golgi network. Coatomer complex is required for budding from Golgi membranes, and is essential for the retrograde Golgi-to-ER transport of dilysine-tagged proteins. The polypeptide is Coatomer subunit beta' (Drosophila melanogaster (Fruit fly)).